Reading from the N-terminus, the 431-residue chain is Histidinol dehydrogenase (431 aa).

NAD(+) is bound by residues Tyr127, Gln185, and Asn208. Substrate is bound by residues Ser234, Gln256, and His259. Gln256 and His259 together coordinate Zn(2+). Catalysis depends on proton acceptor residues Glu323 and His324. Substrate contacts are provided by His324, Asp357, Glu411, and His416. Residue Asp357 participates in Zn(2+) binding. His416 provides a ligand contact to Zn(2+).

The protein belongs to the histidinol dehydrogenase family. Zn(2+) is required as a cofactor.

It carries out the reaction L-histidinol + 2 NAD(+) + H2O = L-histidine + 2 NADH + 3 H(+). It functions in the pathway amino-acid biosynthesis; L-histidine biosynthesis; L-histidine from 5-phospho-alpha-D-ribose 1-diphosphate: step 9/9. In terms of biological role, catalyzes the sequential NAD-dependent oxidations of L-histidinol to L-histidinaldehyde and then to L-histidine. This chain is Histidinol dehydrogenase, found in Vibrio vulnificus (strain YJ016).